The following is a 177-amino-acid chain: MSRVAKAPVTLPNGVSVTLNDRQVEVKGKNGNMSLRLHELVELKQEDDLIIFSPTVDSKEAMMHAGTMRSLLNNLVIGVNEGFEKRLLLIGVGYRAQATGNKVTLNVGYSHPVEYTLPEGVSAETPTQTEIVLKSNDKQQLGQAAANIRGFRPPEPYKGKGIRYSDEHVIRKEAKKK.

Belongs to the universal ribosomal protein uL6 family. In terms of assembly, part of the 50S ribosomal subunit.

Its function is as follows. This protein binds to the 23S rRNA, and is important in its secondary structure. It is located near the subunit interface in the base of the L7/L12 stalk, and near the tRNA binding site of the peptidyltransferase center. This Psychrobacter arcticus (strain DSM 17307 / VKM B-2377 / 273-4) protein is Large ribosomal subunit protein uL6.